A 288-amino-acid polypeptide reads, in one-letter code: Methyltransferase ucsB (288 aa).

S-adenosyl-L-methionine-binding positions include Asp87 and 121–122 (DA).

The protein belongs to the class I-like SAM-binding methyltransferase superfamily.

It participates in mycotoxin biosynthesis. In terms of biological role, methyltransferase; part of the gene cluster that mediates the biosynthesis of UCS1025A, a member of the pyrrolizidinone family that acts as a strong telomerase inhibitor and displays potent antibacterial and antitumor properties. These compounds share a hemiaminal-containing pyrrolizidinone core fused with a gamma-lactone, giving a furopyrrolizidine that is connected to a decalin fragment. The polyketide synthase module (PKS) of the PKS-NRPS ucsA is responsible for the synthesis of the polyketide backbone via the condensation of an acetyl-CoA starter unit with 6 malonyl-CoA units. The downstream nonribosomal peptide synthetase (NRPS) module then amidates the carboxyl end of the polyketide with a 2S,3S-methylproline derived from L-isoleucine by the 2-oxoglutarate-dependent dioxygenase ucsF which converts L-isoleucine to (4S,5S)-4-methylpyrroline-5-carboxylate that is further converted to 2S,3S-methylproline by the pyrroline-5-carboxylate reductase ucsG. Reductive release of the completed aminoacyl polyketide from the assembly line can form the 3-pyrrolin-2-one structure via an intramolecular Knoevenagel reaction. Because ucsA lacks a designated enoylreductase (ER) domain, the required activity is provided the enoyl reductase ucsL. This keto acyclic precursor is the substrate of the Diels-Alderase ucsH, that catalyzes the Diels-Alder cycloaddition. Oxidation of the 3S-methyl group to a carboxylate by the cytochrome P450 monooxygenase ucsK allows an oxa-Michael cyclization that might involve the reductase/dehydrogenase ucsI and which furnishes the furopyrrolizidine. The oxidase ucsJ likely plays a critical role in stereoselective reduction of the C5-C6 double bond to afford the required R-configured carboxylate group. Further enolization and oxidation at C5 by an unidentified enzyme affords the last intermediate that can undergo oxa-Michael cyclization to yield UCS1025A. The sequence is that of Methyltransferase ucsB from Acremonium sp.